A 117-amino-acid chain; its full sequence is Protein YchN (117 aa).

To M.jannaschii MJ0989. As to quaternary structure, homohexamer. The hexamer is formed by a dimer of trimers.

This is Protein YchN (ychN) from Escherichia coli O157:H7.